Reading from the N-terminus, the 601-residue chain is Elongation factor 4 (601 aa).

One can recognise a tr-type G domain in the interval 6–188 (SHIRNFSIIA…QIVHRVPAPE (183 aa)). Residues 18 to 23 (DHGKST) and 135 to 138 (NKID) contribute to the GTP site.

This sequence belongs to the TRAFAC class translation factor GTPase superfamily. Classic translation factor GTPase family. LepA subfamily.

It localises to the cell inner membrane. The enzyme catalyses GTP + H2O = GDP + phosphate + H(+). Functionally, required for accurate and efficient protein synthesis under certain stress conditions. May act as a fidelity factor of the translation reaction, by catalyzing a one-codon backward translocation of tRNAs on improperly translocated ribosomes. Back-translocation proceeds from a post-translocation (POST) complex to a pre-translocation (PRE) complex, thus giving elongation factor G a second chance to translocate the tRNAs correctly. Binds to ribosomes in a GTP-dependent manner. The protein is Elongation factor 4 of Anaeromyxobacter sp. (strain K).